A 276-amino-acid chain; its full sequence is Large ribosomal subunit protein uL2 (276 aa).

Residues N203–K276 form a disordered region. Basic residues predominate over residues G210–Q220. The segment covering K265–K276 has biased composition (basic and acidic residues).

This sequence belongs to the universal ribosomal protein uL2 family. Part of the 50S ribosomal subunit. Forms a bridge to the 30S subunit in the 70S ribosome.

Its function is as follows. One of the primary rRNA binding proteins. Required for association of the 30S and 50S subunits to form the 70S ribosome, for tRNA binding and peptide bond formation. It has been suggested to have peptidyltransferase activity; this is somewhat controversial. Makes several contacts with the 16S rRNA in the 70S ribosome. This chain is Large ribosomal subunit protein uL2, found in Coprothermobacter proteolyticus (strain ATCC 35245 / DSM 5265 / OCM 4 / BT).